Reading from the N-terminus, the 369-residue chain is Beta-1,3-galactosyltransferase 9 (369 aa).

The Cytoplasmic segment spans residues 1–12; the sequence is MQVTFCRLRTHQ. A helical; Signal-anchor for type II membrane protein membrane pass occupies residues 13–33; the sequence is WCFILFNVILFHALLFGTDFV. At 34–369 the chain is on the lumenal side; it reads EEYFLHSLPY…IKNNLMYFAD (336 aa). N-linked (GlcNAc...) asparagine glycosylation is found at asparagine 66, asparagine 96, and asparagine 109.

The protein belongs to the glycosyltransferase 31 family.

The protein resides in the golgi apparatus membrane. Its function is as follows. Putative glycosyltransferase that could catalyze the transfer of galactose residues from UDP-alpha-D-galactose. The polypeptide is Beta-1,3-galactosyltransferase 9 (Homo sapiens (Human)).